Consider the following 359-residue polypeptide: Archaemetzincin-2 (359 aa).

A Zn(2+)-binding site is contributed by His254. Glu255 serves as the catalytic Proton acceptor. 6 residues coordinate Zn(2+): His258, His264, Cys265, Cys270, Cys289, and Cys292.

The protein belongs to the peptidase M54 family. Zn(2+) is required as a cofactor.

In terms of biological role, probable zinc metalloprotease. The chain is Archaemetzincin-2 (Amz2) from Rattus norvegicus (Rat).